Consider the following 226-residue polypeptide: 2-dehydro-3-deoxy-phosphogluconate aldolase (226 aa).

Glu-57 serves as the catalytic Proton acceptor. 3 residues coordinate pyruvate: Arg-61, Thr-85, and Lys-145. The active-site Schiff-base intermediate with substrate is Lys-145.

It belongs to the KHG/KDPG aldolase family. In terms of assembly, homotrimer.

It catalyses the reaction 2-dehydro-3-deoxy-6-phospho-D-gluconate = D-glyceraldehyde 3-phosphate + pyruvate. Its pathway is carbohydrate acid metabolism; 2-dehydro-3-deoxy-D-gluconate degradation; D-glyceraldehyde 3-phosphate and pyruvate from 2-dehydro-3-deoxy-D-gluconate: step 2/2. Its function is as follows. Involved in the degradation of glucose via the Entner-Doudoroff pathway. Catalyzes the reversible, stereospecific retro-aldol cleavage of 2-keto-3-deoxy-6-phosphogluconate (KDPG) to pyruvate and D-glyceraldehyde-3-phosphate. The polypeptide is 2-dehydro-3-deoxy-phosphogluconate aldolase (Pseudomonas putida (Arthrobacter siderocapsulatus)).